The chain runs to 288 residues: Syntaxin PEP12 (288 aa).

At 1–268 (MSEDEFFGGD…RYQKRTSRWR (268 aa)) the chain is on the cytoplasmic side. Phosphoserine is present on residues serine 2 and serine 23. A t-SNARE coiled-coil homology domain is found at 195–257 (QNLIEQRDQE…QLASDELRKA (63 aa)). Residues 269–288 (VYLLIVLLVMLLFIFLIMKL) form a helical; Anchor for type IV membrane protein membrane-spanning segment.

It belongs to the syntaxin family. Post-translationally, ubiquitinated.

It is found in the membrane. Functionally, plays a role in the sorting and targeting of vacuolar proteases. In Saccharomyces cerevisiae (strain ATCC 204508 / S288c) (Baker's yeast), this protein is Syntaxin PEP12 (PEP12).